The following is a 382-amino-acid chain: Galactokinase (382 aa).

34-37 (EHTD) provides a ligand contact to substrate. 124 to 130 (GAGLSSS) is an ATP binding site. Residues S130 and E162 each coordinate Mg(2+). D174 serves as the catalytic Proton acceptor. Y223 serves as a coordination point for substrate.

The protein belongs to the GHMP kinase family. GalK subfamily.

The protein localises to the cytoplasm. It carries out the reaction alpha-D-galactose + ATP = alpha-D-galactose 1-phosphate + ADP + H(+). It participates in carbohydrate metabolism; galactose metabolism. In terms of biological role, catalyzes the transfer of the gamma-phosphate of ATP to D-galactose to form alpha-D-galactose-1-phosphate (Gal-1-P). The chain is Galactokinase from Escherichia coli O157:H7 (strain EC4115 / EHEC).